Here is a 348-residue protein sequence, read N- to C-terminus: Ion-translocating oxidoreductase complex subunit D (348 aa).

The next 5 membrane-spanning stretches (helical) occupy residues L15–A35, Y36–I56, L67–S87, I88–A108, and V125–I145. FMN phosphoryl threonine is present on T186. The next 5 membrane-spanning stretches (helical) occupy residues L212–I232, I241–P261, L265–T285, L298–P318, and A320–Q340.

The protein belongs to the NqrB/RnfD family. In terms of assembly, the complex is composed of six subunits: RnfA, RnfB, RnfC, RnfD, RnfE and RnfG. It depends on FMN as a cofactor.

It localises to the cell inner membrane. Functionally, part of a membrane-bound complex that couples electron transfer with translocation of ions across the membrane. The protein is Ion-translocating oxidoreductase complex subunit D of Actinobacillus pleuropneumoniae serotype 3 (strain JL03).